Reading from the N-terminus, the 173-residue chain is Peptide deformylase (173 aa).

The Fe cation site is built by C91 and H133. The active site involves E134. Fe cation is bound at residue H137.

Belongs to the polypeptide deformylase family. The cofactor is Fe(2+).

The catalysed reaction is N-terminal N-formyl-L-methionyl-[peptide] + H2O = N-terminal L-methionyl-[peptide] + formate. Functionally, removes the formyl group from the N-terminal Met of newly synthesized proteins. Requires at least a dipeptide for an efficient rate of reaction. N-terminal L-methionine is a prerequisite for activity but the enzyme has broad specificity at other positions. The sequence is that of Peptide deformylase from Buchnera aphidicola subsp. Acyrthosiphon pisum (strain 5A).